Consider the following 238-residue polypeptide: 3-deoxy-D-manno-octulosonic acid kinase (238 aa).

Asp-167 is an active-site residue.

This sequence belongs to the protein kinase superfamily. KdkA/RfaP family.

It is found in the cell inner membrane. It carries out the reaction an alpha-Kdo-(2-&gt;6)-lipid IVA + ATP = a 4-O-phospho-alpha-Kdo-(2-&gt;6)-lipid IVA + ADP + H(+). It participates in bacterial outer membrane biogenesis; LPS core biosynthesis. Functionally, catalyzes the ATP-dependent phosphorylation of the 3-deoxy-D-manno-octulosonic acid (Kdo) residue in Kdo-lipid IV(A) at the 4-OH position. This Vibrio parahaemolyticus serotype O3:K6 (strain RIMD 2210633) protein is 3-deoxy-D-manno-octulosonic acid kinase.